The primary structure comprises 490 residues: Betaine aldehyde dehydrogenase (490 aa).

D93 contacts K(+). Residue 150–152 participates in NAD(+) binding; it reads GAW. K162 acts as the Charge relay system in catalysis. 176–179 is a binding site for NAD(+); that stretch reads KPSE. V180 provides a ligand contact to K(+). 230 to 233 lines the NAD(+) pocket; the sequence is GIAS. Residue L246 participates in K(+) binding. The active-site Proton acceptor is the E252. NAD(+) is bound by residues G254, C286, and E387. The active-site Nucleophile is the C286. C286 is subject to Cysteine sulfenic acid (-SOH). Residues K457 and G460 each coordinate K(+). E464 functions as the Charge relay system in the catalytic mechanism.

Belongs to the aldehyde dehydrogenase family. In terms of assembly, dimer of dimers. Requires K(+) as cofactor.

It carries out the reaction betaine aldehyde + NAD(+) + H2O = glycine betaine + NADH + 2 H(+). It participates in amine and polyamine biosynthesis; betaine biosynthesis via choline pathway; betaine from betaine aldehyde: step 1/1. Involved in the biosynthesis of the osmoprotectant glycine betaine. Catalyzes the irreversible oxidation of betaine aldehyde to the corresponding acid. This chain is Betaine aldehyde dehydrogenase, found in Yersinia pestis.